Reading from the N-terminus, the 92-residue chain is Large ribosomal subunit protein eL37 (92 aa).

Zn(2+) contacts are provided by cysteine 19, cysteine 22, cysteine 34, and cysteine 37. Residues 19-37 (CRRCGRRSYHIQKSTCANC) form a C4-type zinc finger. The disordered stretch occupies residues 50-92 (SEKAKRRKTTGSGRTAHLRDVHRRFKNGFQVGTPKGARGPENH).

Belongs to the eukaryotic ribosomal protein eL37 family. It depends on Zn(2+) as a cofactor.

In terms of biological role, binds to the 23S rRNA. In Emericella nidulans (strain FGSC A4 / ATCC 38163 / CBS 112.46 / NRRL 194 / M139) (Aspergillus nidulans), this protein is Large ribosomal subunit protein eL37 (rpl37).